The chain runs to 101 residues: NAD(P)H-quinone oxidoreductase subunit 4L, chloroplastic (101 aa).

The next 3 membrane-spanning stretches (helical) occupy residues 2-22 (MFEYALVLSSYLFSMGIYGLI), 32-52 (MCLELILNAVNMNLVTFSDLF), and 61-81 (IFSIFVIAIAAAEAAIGPAIV).

Belongs to the complex I subunit 4L family. As to quaternary structure, NDH is composed of at least 16 different subunits, 5 of which are encoded in the nucleus.

It is found in the plastid. Its subcellular location is the chloroplast thylakoid membrane. It carries out the reaction a plastoquinone + NADH + (n+1) H(+)(in) = a plastoquinol + NAD(+) + n H(+)(out). The enzyme catalyses a plastoquinone + NADPH + (n+1) H(+)(in) = a plastoquinol + NADP(+) + n H(+)(out). Functionally, NDH shuttles electrons from NAD(P)H:plastoquinone, via FMN and iron-sulfur (Fe-S) centers, to quinones in the photosynthetic chain and possibly in a chloroplast respiratory chain. The immediate electron acceptor for the enzyme in this species is believed to be plastoquinone. Couples the redox reaction to proton translocation, and thus conserves the redox energy in a proton gradient. The protein is NAD(P)H-quinone oxidoreductase subunit 4L, chloroplastic of Amborella trichopoda.